The sequence spans 328 residues: Ferredoxin--NADP reductase 1 (328 aa).

FAD is bound by residues aspartate 28, glutamine 36, tyrosine 41, alanine 81, isoleucine 116, aspartate 277, and serine 320.

This sequence belongs to the ferredoxin--NADP reductase type 2 family. In terms of assembly, homodimer. FAD serves as cofactor.

It catalyses the reaction 2 reduced [2Fe-2S]-[ferredoxin] + NADP(+) + H(+) = 2 oxidized [2Fe-2S]-[ferredoxin] + NADPH. The chain is Ferredoxin--NADP reductase 1 from Sulfolobus acidocaldarius (strain ATCC 33909 / DSM 639 / JCM 8929 / NBRC 15157 / NCIMB 11770).